Consider the following 339-residue polypeptide: Glyceraldehyde-3-phosphate dehydrogenase (339 aa).

NAD(+) contacts are provided by residues 12-13 (RI), aspartate 35, and lysine 84. D-glyceraldehyde 3-phosphate is bound by residues 155–157 (SCT), threonine 186, 215–216 (TG), and arginine 238. Catalysis depends on cysteine 156, which acts as the Nucleophile. Position 320 (asparagine 320) interacts with NAD(+).

The protein belongs to the glyceraldehyde-3-phosphate dehydrogenase family. In terms of assembly, homotetramer.

It localises to the cytoplasm. The enzyme catalyses D-glyceraldehyde 3-phosphate + phosphate + NAD(+) = (2R)-3-phospho-glyceroyl phosphate + NADH + H(+). Its pathway is carbohydrate degradation; glycolysis; pyruvate from D-glyceraldehyde 3-phosphate: step 1/5. This chain is Glyceraldehyde-3-phosphate dehydrogenase (GAPD), found in Mastigamoeba balamuthi (Phreatamoeba balamuthi).